The following is a 390-amino-acid chain: Phosphopentomutase (390 aa).

6 residues coordinate Mn(2+): Asp-11, Asp-283, His-288, Asp-324, His-325, and His-336.

It belongs to the phosphopentomutase family. Mn(2+) is required as a cofactor.

It localises to the cytoplasm. It catalyses the reaction 2-deoxy-alpha-D-ribose 1-phosphate = 2-deoxy-D-ribose 5-phosphate. The enzyme catalyses alpha-D-ribose 1-phosphate = D-ribose 5-phosphate. Its pathway is carbohydrate degradation; 2-deoxy-D-ribose 1-phosphate degradation; D-glyceraldehyde 3-phosphate and acetaldehyde from 2-deoxy-alpha-D-ribose 1-phosphate: step 1/2. Functionally, isomerase that catalyzes the conversion of deoxy-ribose 1-phosphate (dRib-1-P) and ribose 1-phosphate (Rib-1-P) to deoxy-ribose 5-phosphate (dRib-5-P) and ribose 5-phosphate (Rib-5-P), respectively. The chain is Phosphopentomutase from Alkaliphilus oremlandii (strain OhILAs) (Clostridium oremlandii (strain OhILAs)).